The primary structure comprises 318 residues: Death effector domain-containing protein (318 aa).

Positions 25–103 (SLHRMFDIVG…RHDLLPYVTL (79 aa)) constitute a DED domain. 2 disordered regions span residues 128–147 (PRALSDPEPRPPQPSKTVPP) and 160–191 (QMCSKRPARGRATLGSQRKRRKSVTPDPKEKQ).

In terms of assembly, interacts with CASP8, CASP10, KRT8, KRT18, CASP3 and FADD. Homodimerizes and heterodimerizes with DEDD2. Exists predominantly in a mono- or diubiquitinated form. Widely expressed with highest levels in testis.

The protein resides in the cytoplasm. The protein localises to the nucleus. Its subcellular location is the nucleolus. A scaffold protein that directs CASP3 to certain substrates and facilitates their ordered degradation during apoptosis. May also play a role in mediating CASP3 cleavage of KRT18. Regulates degradation of intermediate filaments during apoptosis. May play a role in the general transcription machinery in the nucleus and might be an important regulator of the activity of GTF3C3. Inhibits DNA transcription in vitro. The sequence is that of Death effector domain-containing protein (DEDD) from Homo sapiens (Human).